The sequence spans 508 residues: Splicing regulatory glutamine/lysine-rich protein 1 (508 aa).

Residues 66-142 enclose the RRM domain; that stretch reads RTVYVGNLNS…RPLKINHSNN (77 aa). Serine 171 and serine 184 each carry phosphoserine. The segment at 173 to 508 is disordered; it reads ISAAIEPESG…ENLSTKTEAV (336 aa). Basic and acidic residues predominate over residues 180–189; the sequence is ESGKSNERKG. A compositionally biased stretch (basic residues) spans 190–259; that stretch reads GRSRSHTRSK…KSRSRSHSRD (70 aa). The segment covering 260 to 355 has biased composition (basic and acidic residues); it reads KRKDTREKIK…DRSKEIDEKR (96 aa). Threonine 363 carries the post-translational modification Phosphothreonine. Over residues 372–388 the composition is skewed to basic residues; it reads RRSRSSSRERRRRRSRS. Residues 419–488 are compositionally biased toward basic and acidic residues; the sequence is REKERDHISE…DAPRTEENKI (70 aa). Polar residues predominate over residues 489-508; the sequence is QHNGNCQLNEENLSTKTEAV. Lysine 504 participates in a covalent cross-link: Glycyl lysine isopeptide (Lys-Gly) (interchain with G-Cter in SUMO2).

The protein belongs to the splicing factor SR family. Homodimer. Binds SFRS1, SFRS2, SFRS3 and SFRS6. Interacts with the spliceosome. Interacts with SREK1IP1.

It localises to the nucleus. Its function is as follows. Participates in the regulation of alternative splicing by modulating the activity of other splice facors. Inhibits the splicing activity of SFRS1, SFRS2 and SFRS6. Augments the splicing activity of SFRS3. The sequence is that of Splicing regulatory glutamine/lysine-rich protein 1 (SREK1) from Homo sapiens (Human).